The sequence spans 105 residues: uncharacterized protein (105 aa).

This is an uncharacterized protein from Microplitis demolitor (Parasitoid wasp).